The primary structure comprises 416 residues: tRNA(Met) cytidine acetate ligase (416 aa).

ATP-binding positions include 7–20 (VAEYNPFHNGHLYL), Gly102, Asn166, and Arg191.

Belongs to the TmcAL family.

The protein resides in the cytoplasm. It catalyses the reaction cytidine(34) in elongator tRNA(Met) + acetate + ATP = N(4)-acetylcytidine(34) in elongator tRNA(Met) + AMP + diphosphate. Functionally, catalyzes the formation of N(4)-acetylcytidine (ac(4)C) at the wobble position of elongator tRNA(Met), using acetate and ATP as substrates. First activates an acetate ion to form acetyladenylate (Ac-AMP) and then transfers the acetyl group to tRNA to form ac(4)C34. The protein is tRNA(Met) cytidine acetate ligase of Syntrophomonas wolfei subsp. wolfei (strain DSM 2245B / Goettingen).